Here is an 826-residue protein sequence, read N- to C-terminus: MICRWIAFNSSKVSRSLSPFSSLLFTKSSFSVAKMDDESLPTTNSTSDHRGFYKEILFGMKKIGFREFLHGYHFRGLVSELRHVHVEEIMDELMSESSDLSVWFFKELRDIYAFRHSSFSTLLVSHVLAGQRRFKELQVILEQLLQEEGTLCELLSNSFRKWESTGLVWDMLLFLSSRLRMVDDSLYILKKMKDQNLNVSTQSYNSVLYHFRETDKMWDVYKEIKDKNEHTYSTVVDGLCRQQKLEDAVLFLRTSEWKDIGPSVVSFNSIMSGYCKLGFVDMAKSFFCTVLKCGLVPSVYSHNILINGLCLVGSIAEALELASDMNKHGVEPDSVTYNILAKGFHLLGMISGAWEVIRDMLDKGLSPDVITYTILLCGQCQLGNIDMGLVLLKDMLSRGFELNSIIPCSVMLSGLCKTGRIDEALSLFNQMKADGLSPDLVAYSIVIHGLCKLGKFDMALWLYDEMCDKRILPNSRTHGALLLGLCQKGMLLEARSLLDSLISSGETLDIVLYNIVIDGYAKSGCIEEALELFKVVIETGITPSVATFNSLIYGYCKTQNIAEARKILDVIKLYGLAPSVVSYTTLMDAYANCGNTKSIDELRREMKAEGIPPTNVTYSVIFKGLCRGWKHENCNHVLRERIFEKCKQGLRDMESEGIPPDQITYNTIIQYLCRVKHLSGAFVFLEIMKSRNLDASSATYNILIDSLCVYGYIRKADSFIYSLQEQNVSLSKFAYTTLIKAHCVKGDPEMAVKLFHQLLHRGFNVSIRDYSAVINRLCRRHLVNESKFFFCLMLSQGISPDLDICEVMIKSDELLSWTIKWGLLPD.

16 PPR repeats span residues 228-262, 263-297, 298-332, 333-367, 368-402, 404-438, 439-473, 474-508, 509-543, 544-578, 579-613, 614-648, 661-695, 696-730, 731-765, and 766-800; these read NEHT…DIGP, SVVS…GLVP, SVYS…GVEP, DSVT…GLSP, DVIT…GFEL, SIIP…GLSP, DLVA…RILP, NSRT…GETL, DIVL…GITP, SVAT…GLAP, SVVS…GIPP, TNVT…KCKQ, DQIT…NLDA, SSAT…NVSL, SKFA…GFNV, and SIRD…GISP.

The protein belongs to the PPR family. P subfamily.

This is Putative pentatricopeptide repeat-containing protein At1g13630 from Arabidopsis thaliana (Mouse-ear cress).